Here is a 430-residue protein sequence, read N- to C-terminus: Purine nucleoside phosphorylase LACC1 (430 aa).

Lysine 247 carries the post-translational modification N6-acetyllysine. Histidine 250, cysteine 284, and histidine 301 together coordinate Zn(2+).

Belongs to the purine nucleoside phosphorylase YfiH/LACC1 family. In terms of assembly, interacts with FASN. Interacts with SDHA. Interacts with ATF6, EIF2AK3 and ERN1. In terms of processing, phosphorylated on tyrosine residues. As to expression, predominantly expressed in myeloid cells. Highly expressed in primary macrophages and dendritic cells sorted from the peritoneum or spleen, respectively (at protein level).

Its subcellular location is the cytoplasm. It is found in the nucleus. The protein localises to the endoplasmic reticulum. It localises to the peroxisome. It catalyses the reaction adenosine + phosphate = alpha-D-ribose 1-phosphate + adenine. The enzyme catalyses inosine + phosphate = alpha-D-ribose 1-phosphate + hypoxanthine. It carries out the reaction guanosine + phosphate = alpha-D-ribose 1-phosphate + guanine. The catalysed reaction is S-methyl-5'-thioadenosine + phosphate = 5-(methylsulfanyl)-alpha-D-ribose 1-phosphate + adenine. It catalyses the reaction adenosine + H2O + H(+) = inosine + NH4(+). Purine nucleoside enzyme that catalyzes the phosphorolysis of adenosine, guanosine and inosine nucleosides, yielding D-ribose 1-phosphate and the respective free bases, adenine, guanine and hypoxanthine. Also catalyzes the phosphorolysis of S-methyl-5'-thioadenosine into adenine and S-methyl-5-thio-alpha-D-ribose 1-phosphate. Also has adenosine deaminase activity. Acts as a regulator of innate immunity in macrophages by modulating the purine nucleotide metabolism, thereby regulating the metabolic function and bioenergetic state of macrophages. Enables a purine nucleotide cycle between adenosine and inosine monophosphate and adenylosuccinate that prevents cytoplasmic acidification and balances the cytoplasmic-mitochondrial redox interface. The purine nucleotide cycle consumes aspartate and releases fumarate in a manner involving fatty acid oxidation and ATP-citrate lyase activity. Participates in pattern recognition receptor-induced cytokines in macrophages: associates with the NOD2-signaling complex and promotes optimal NOD2-induced signaling, cytokine secretion and bacterial clearance. Localizes to the endoplasmic reticulum upon PRR stimulation of macrophages and associates with endoplasmic reticulum-stress sensors, promoting the endoplasmic reticulum unfolded protein response (UPR). Does not show laccase activity. The polypeptide is Purine nucleoside phosphorylase LACC1 (Mus musculus (Mouse)).